Consider the following 105-residue polypeptide: Nucleoid-associated protein MXAN_1931 (105 aa).

Belongs to the YbaB/EbfC family. Homodimer.

It localises to the cytoplasm. The protein localises to the nucleoid. Functionally, binds to DNA and alters its conformation. May be involved in regulation of gene expression, nucleoid organization and DNA protection. This Myxococcus xanthus (strain DK1622) protein is Nucleoid-associated protein MXAN_1931.